A 422-amino-acid polypeptide reads, in one-letter code: Isocitrate dehydrogenase [NADP] (422 aa).

An NADP(+)-binding site is contributed by T94. Residues S103, N105, R109, R119, and R143 each coordinate D-threo-isocitrate. Residue D310 coordinates Mg(2+). Residues 344 to 350 (HGTAPKY), N357, Y396, and R400 each bind NADP(+).

Belongs to the isocitrate and isopropylmalate dehydrogenases family. In terms of assembly, homodimer. Mg(2+) serves as cofactor. It depends on Mn(2+) as a cofactor.

The catalysed reaction is D-threo-isocitrate + NADP(+) = 2-oxoglutarate + CO2 + NADPH. Its function is as follows. Catalyzes the oxidative decarboxylation of isocitrate to 2-oxoglutarate and carbon dioxide with the concomitant reduction of NADP(+). The sequence is that of Isocitrate dehydrogenase [NADP] (icd) from Staphylococcus aureus (strain MSSA476).